We begin with the raw amino-acid sequence, 408 residues long: CinA-like protein (408 aa).

Belongs to the CinA family.

The polypeptide is CinA-like protein (Thermotoga neapolitana (strain ATCC 49049 / DSM 4359 / NBRC 107923 / NS-E)).